We begin with the raw amino-acid sequence, 425 residues long: MTSFFDSPSKVIGASIALRAVLLVYGAWQDAHSPIKYTDIDYFVFTDAARYVSRGASPYARDTYRYTPLLAWLLLPTTWDSIPGFFAFGKALFALADVVAGWLIAKVLVSAYGMSPSRALKYASVWLLNPMVANISTRGSSEGLLGVLVVGLLWAVLSRRVSLAGVILGLGVHFKIYPFIYGPAVVWWFDAERDGSGSPRGTATARAAREKDDGQDGQGILSKAVDFLTPARIHLTLVALATFSALNVSMYILYDLPFAQNTYLHHLTRIDHRHNFSPYSTLLYLSAAGGARTAFESLAFIPQLLLSVVVIPLVLGKKSLAGTMLAQTFAFVTFNKVCTSQYFLWYLIFLPFYLPSSSLMKNPRKGILVGLLWVIAQALWLQQGYNLEFLGLSSFVPGLFLASLFFFAVNVWILGIIVEDVGGSA.

A run of 9 helical transmembrane segments spans residues 11–31, 85–105, 144–164, 166–186, 233–253, 295–315, 340–360, 367–387, and 398–418; these read VIGA…WQDA, FFAF…WLIA, LLGV…VSLA, VILG…PAVV, IHLT…MYIL, FESL…PLVL, SQYF…SSLM, ILVG…GYNL, and GLFL…GIIV.

This sequence belongs to the PIGM family.

The protein localises to the endoplasmic reticulum membrane. The protein operates within glycolipid biosynthesis; glycosylphosphatidylinositol-anchor biosynthesis. Mannosyltransferase involved in glycosylphosphatidylinositol-anchor biosynthesis. Transfers the first alpha-1,4-mannose to GlcN-acyl-PI during GPI precursor assembly. Required for cell wall integrity. This Aspergillus fumigatus (strain ATCC MYA-4609 / CBS 101355 / FGSC A1100 / Af293) (Neosartorya fumigata) protein is GPI mannosyltransferase 1 (gpi14).